Consider the following 372-residue polypeptide: ATP-sensitive inward rectifier potassium channel 1 (372 aa).

The Cytoplasmic portion of the chain corresponds to 1 to 58; that stretch reads MFKHLRRWFVTHIFGRSRQRARLVSKDGRCNIEFGNVDAQSRFIFFVDIWTTVLDLKW. Ser25 carries the phosphoserine; by SGK1 modification. A helical membrane pass occupies residues 59–83; that stretch reads RYKMTVFITAFLGSWFLFGLLWYVV. At 84 to 108 the chain is on the extracellular side; sequence AYVHKDLPEFYPPDNRTPCVENING. Residue Asn98 is glycosylated (N-linked (GlcNAc...) asparagine). The helical; Pore-forming intramembrane region spans 109–120; the sequence is MTSAFLFSLETQ. Positions 121–127 form an intramembrane region, pore-forming; sequence VTIGYGF. The short motif at 122–127 is the Selectivity filter element; that stretch reads TIGYGF. Topologically, residues 128-136 are extracellular; it reads RFVTEQCAT. A helical transmembrane segment spans residues 137 to 158; that stretch reads AIFLLIFQSILGVIINSFMCGA. Over 159 to 372 the chain is Cytoplasmic; it reads ILAKISRPKK…EVDETDDTQM (214 aa). Residues 161–188 form a polyphosphoinositide (PIP2)-binding region; the sequence is AKISRPKKRAKTITFSKNAVISKRGGKL. 204–211 provides a ligand contact to ATP; it reads GSHIYGKL.

It belongs to the inward rectifier-type potassium channel (TC 1.A.2.1) family. KCNJ1 subfamily. Interacts with SGK1 and SLC9A3R2/NHERF2. Post-translationally, phosphorylation at Ser-25 by SGK1 is necessary for its expression at the cell membrane.

It localises to the cell membrane. The catalysed reaction is K(+)(in) = K(+)(out). Its activity is regulated as follows. Inhibited by WNK3. Activated by phosphatidylinositol 4,5 biphosphate (PtdIns(4,5)P2). Its function is as follows. Inward rectifier potassium channels are characterized by a greater tendency to allow potassium to flow into the cell rather than out of it. Their voltage dependence is regulated by the concentration of extracellular potassium; as external potassium is raised, the voltage range of the channel opening shifts to more positive voltages. The inward rectification is mainly due to the blockage of outward current by internal magnesium. This channel is activated by internal ATP and can be blocked by external barium. In the kidney, probably plays a major role in potassium homeostasis. This Mus musculus (Mouse) protein is ATP-sensitive inward rectifier potassium channel 1 (Kcnj1).